We begin with the raw amino-acid sequence, 847 residues long: Alanine--tRNA ligase (847 aa).

The Zn(2+) site is built by His-554, His-558, Cys-656, and His-660.

It belongs to the class-II aminoacyl-tRNA synthetase family. Zn(2+) is required as a cofactor.

It is found in the cytoplasm. It carries out the reaction tRNA(Ala) + L-alanine + ATP = L-alanyl-tRNA(Ala) + AMP + diphosphate. Its function is as follows. Catalyzes the attachment of alanine to tRNA(Ala) in a two-step reaction: alanine is first activated by ATP to form Ala-AMP and then transferred to the acceptor end of tRNA(Ala). Also edits incorrectly charged Ser-tRNA(Ala) and Gly-tRNA(Ala) via its editing domain. This Helicobacter pylori (strain J99 / ATCC 700824) (Campylobacter pylori J99) protein is Alanine--tRNA ligase.